The primary structure comprises 393 residues: Acetate kinase (393 aa).

Asn-6 serves as a coordination point for Mg(2+). Lys-13 lines the ATP pocket. Residue Arg-87 coordinates substrate. Asp-143 acts as the Proton donor/acceptor in catalysis. Residues 203–207 (HLGNG), 278–280 (DMR), and 326–330 (GIGEN) each bind ATP. Glu-380 contacts Mg(2+).

The protein belongs to the acetokinase family. In terms of assembly, homodimer. It depends on Mg(2+) as a cofactor. Mn(2+) is required as a cofactor.

Its subcellular location is the cytoplasm. The catalysed reaction is acetate + ATP = acetyl phosphate + ADP. It participates in metabolic intermediate biosynthesis; acetyl-CoA biosynthesis; acetyl-CoA from acetate: step 1/2. Catalyzes the formation of acetyl phosphate from acetate and ATP. Can also catalyze the reverse reaction. This is Acetate kinase from Mycoplasma mycoides subsp. mycoides SC (strain CCUG 32753 / NCTC 10114 / PG1).